The following is a 317-amino-acid chain: Annexin A13 (317 aa).

The N-myristoyl glycine moiety is linked to residue glycine 2. 4 Annexin repeats span residues 15 to 86, 87 to 158, 170 to 242, and 246 to 317; these read FDAD…ALLD, RPNE…SLLQ, ELAG…TIVR, and DLEG…ALLH.

It belongs to the annexin family. In terms of assembly, monomer and homodimer. Detected on the tips of microvilli in small intestine (at protein level).

Its subcellular location is the apical cell membrane. It localises to the cell membrane. The protein resides in the cytoplasmic vesicle. In terms of biological role, binds to membranes enriched in phosphatidylserine or phosphatidylglycerol in a calcium-dependent manner. Half-maximal membrane binding requires about 60 uM calcium. Does not bind to membranes that lack phospholipids with an acidic headgroup. The chain is Annexin A13 (Anxa13) from Mus musculus (Mouse).